The chain runs to 220 residues: Probable GTP-binding protein EngB (220 aa).

Residues 24–207 form the EngB-type G domain; that stretch reads PQPEVAFAGR…HELIESWIAP (184 aa). GTP contacts are provided by residues 32-39, 59-63, 81-84, 148-151, and 185-188; these read GRSNAGKS, GRTQH, DLPG, TKCD, and LFSA. Mg(2+)-binding residues include Ser39 and Thr61.

Belongs to the TRAFAC class TrmE-Era-EngA-EngB-Septin-like GTPase superfamily. EngB GTPase family. The cofactor is Mg(2+).

Functionally, necessary for normal cell division and for the maintenance of normal septation. This Paraburkholderia phymatum (strain DSM 17167 / CIP 108236 / LMG 21445 / STM815) (Burkholderia phymatum) protein is Probable GTP-binding protein EngB.